The primary structure comprises 576 residues: 4-alpha-glucanotransferase DPE1, chloroplastic/amyloplastic (576 aa).

A chloroplast-targeting transit peptide spans 1 to 45 (MSILLRPSSSPSLCSSLKLFRLSSPDSLIDAAVLRNRTKPSQSFR).

It belongs to the disproportionating enzyme family.

It localises to the plastid. The protein localises to the chloroplast. Its subcellular location is the amyloplast. The enzyme catalyses Transfers a segment of a (1-&gt;4)-alpha-D-glucan to a new position in an acceptor, which may be glucose or a (1-&gt;4)-alpha-D-glucan.. Chloroplastic alpha-glucanotransferase involved in maltotriose metabolism. Probably uses maltotriose as substrate to transfer a maltosyl unit from one molecule to another, resulting in glucose and maltopentaose. The latter can then be further metabolized to maltose and maltotriose by beta-amylase. Required for normal starch degradation in leaves. This chain is 4-alpha-glucanotransferase DPE1, chloroplastic/amyloplastic (DPE1), found in Arabidopsis thaliana (Mouse-ear cress).